The sequence spans 170 residues: Large ribosomal subunit protein uL5 (170 aa).

Belongs to the universal ribosomal protein uL5 family. In terms of assembly, part of the 50S ribosomal subunit; contacts the 5S rRNA and probably tRNA. Forms a bridge to the 30S subunit in the 70S ribosome.

Functionally, this is one of the proteins that bind and probably mediate the attachment of the 5S RNA into the large ribosomal subunit, where it forms part of the central protuberance. In the 70S ribosome it contacts protein S13 of the 30S subunit (bridge B1b), connecting the 2 subunits; this bridge is implicated in subunit movement. May contact the P site tRNA; the 5S rRNA and some of its associated proteins might help stabilize positioning of ribosome-bound tRNAs. The sequence is that of Large ribosomal subunit protein uL5 from Thermoplasma acidophilum (strain ATCC 25905 / DSM 1728 / JCM 9062 / NBRC 15155 / AMRC-C165).